A 309-amino-acid chain; its full sequence is Serine/threonine-protein phosphatase 2A catalytic subunit beta isoform (309 aa).

Residues aspartate 57, histidine 59, aspartate 85, and asparagine 117 each contribute to the Mn(2+) site. Residue histidine 118 is the Proton donor of the active site. Positions 167 and 241 each coordinate Mn(2+). At tyrosine 307 the chain carries Phosphotyrosine. At leucine 309 the chain carries Leucine methyl ester.

The protein belongs to the PPP phosphatase family. PP-1 subfamily. In terms of assembly, PP2A consists of a common heterodimeric core enzyme (composed of a 36 kDa catalytic subunit (subunit C) and a 65 kDa constant regulatory subunit (PR65) (subunit A)) that associates with a variety of regulatory subunits. Proteins that associate with the core dimer include three families of regulatory subunits B (the R2/B/PR55/B55, R3/B''/PR72/PR130/PR59 and R5/B'/B56 families), the 48 kDa variable regulatory subunit, viral proteins, and cell signaling molecules. Binds PPME1. May indirectly interact with SGO1, most probably through regulatory B56 subunits. Found in a complex with at least ARL2, PPP2CB, PPP2R1A, PPP2R2A, PPP2R5E and TBCD. Interacts with TBCD. Interacts with CTTNBP2NL. Interacts with PTPA. Part of the core of STRIPAK complexes composed of PP2A catalytic and scaffolding subunits, the striatins (PP2A regulatory subunits), the striatin-associated proteins MOB4, STRIP1 and STRIP2, PDCD10 and members of the STE20 kinases, such as STK24 and STK26. Mn(2+) serves as cofactor. Post-translationally, reversibly methyl esterified on Leu-309 by leucine carboxyl methyltransferase 1 (LCMT1) and protein phosphatase methylesterase 1 (PPME1). Carboxyl methylation influences the affinity of the catalytic subunit for the different regulatory subunits, thereby modulating the PP2A holoenzyme's substrate specificity, enzyme activity and cellular localization. Phosphorylation of either threonine (by autophosphorylation-activated protein kinase) or tyrosine results in inactivation of the phosphatase. Auto-dephosphorylation has been suggested as a mechanism for reactivation. In terms of processing, may be monoubiquitinated by NOSIP.

The protein localises to the cytoplasm. It is found in the nucleus. The protein resides in the chromosome. It localises to the centromere. Its subcellular location is the cytoskeleton. The protein localises to the spindle pole. It carries out the reaction O-phospho-L-seryl-[protein] + H2O = L-seryl-[protein] + phosphate. It catalyses the reaction O-phospho-L-threonyl-[protein] + H2O = L-threonyl-[protein] + phosphate. In terms of biological role, catalytic subunit of protein phosphatase 2A (PP2A), a serine/threonine phosphatase involved in the regulation of a wide variety of enzymes, signal transduction pathways, and cellular events. PP2A can modulate the activity of phosphorylase B kinase, casein kinase 2, mitogen-stimulated S6 kinase, and MAP-2 kinase. Part of the striatin-interacting phosphatase and kinase (STRIPAK) complexes. STRIPAK complexes have critical roles in protein (de)phosphorylation and are regulators of multiple signaling pathways including Hippo, MAPK, nuclear receptor and cytoskeleton remodeling. Different types of STRIPAK complexes are involved in a variety of biological processes such as cell growth, differentiation, apoptosis, metabolism and immune regulation. The sequence is that of Serine/threonine-protein phosphatase 2A catalytic subunit beta isoform (PPP2CB) from Bos taurus (Bovine).